We begin with the raw amino-acid sequence, 211 residues long: Mitotic spindle assembly checkpoint protein MAD2B (211 aa).

Residues 13–203 enclose the HORMA domain; sequence QVVADVLCEF…SDILKMQLYV (191 aa). The tract at residues 21 to 155 is mediates interaction with REV1 and REV3L and homodimerization; that stretch reads EFLEVAVHLI…FTVLVHTREA (135 aa).

Homooligomer. Heterodimer with REV3L. This dimer forms the minimal DNA polymerase zeta complex (Pol-zeta2), with REV3L bearing DNA polymerase catalytic activity, although its activity is very low in this context. Component of the tetrameric Pol-zeta complex (Pol-zeta4), which consists of REV3L, MAD2L2, POLD2 and POLD3; Pol-zeta4 is the fully active form of DNA polymerase zeta. Component of the shieldin complex, consisting of SHLD1, SHLD2, SHLD3 and MAD2L2/REV7. Within the complex, SHLD2 forms a scaffold which interacts with a SHLD3-MAD2L2 subcomplex via its N-terminus, and with SHLD1 via its C-terminus. Interacts with REV1. Interacts with ADAM9. Interacts with CHAMP1. Interacts with FZR1 (in complex with the anaphase promoting complex APC). May interact with CDC20. Interacts with RAN. Interacts with ELK1; the interaction is direct and recruits MAD2L2 to ELK1-specific promoters. May interact with the JNK kinases MAPK8 and/or MAPK9 to stimulate ELK1 phosphorylation and transcriptional activity upon DNA damage. Interacts with TCF7L2; prevents its binding to promoters and negatively modulates its transcriptional activity. Interacts with YY1AP1. Interacts with PRCC; the interaction is direct. Interacts with POGZ. Interacts with ASTE1.

The protein resides in the nucleus. The protein localises to the cytoplasm. It localises to the cytoskeleton. Its subcellular location is the spindle. Adapter protein able to interact with different proteins and involved in different biological processes. Mediates the interaction between the error-prone DNA polymerase zeta catalytic subunit REV3L and the inserter polymerase REV1, thereby mediating the second polymerase switching in translesion DNA synthesis. Translesion DNA synthesis releases the replication blockade of replicative polymerases, stalled in presence of DNA lesions. Component of the shieldin complex, which plays an important role in repair of DNA double-stranded breaks (DSBs). During G1 and S phase of the cell cycle, the complex functions downstream of TP53BP1 to promote non-homologous end joining (NHEJ) and suppress DNA end resection. Mediates various NHEJ-dependent processes including immunoglobulin class-switch recombination, and fusion of unprotected telomeres. May also regulate another aspect of cellular response to DNA damage through regulation of the JNK-mediated phosphorylation and activation of the transcriptional activator ELK1. Inhibits the FZR1- and probably CDC20-mediated activation of the anaphase promoting complex APC thereby regulating progression through the cell cycle. Regulates TCF7L2-mediated gene transcription and may play a role in epithelial-mesenchymal transdifferentiation. The protein is Mitotic spindle assembly checkpoint protein MAD2B (MAD2L2) of Bos taurus (Bovine).